Here is a 1209-residue protein sequence, read N- to C-terminus: Putative lysine-specific demethylase JMJ16 (1209 aa).

In terms of domain architecture, JmjN spans 146–187 (APVFYPSEEEFEDTLNYIAKIRPEAEKYGICRIVPPPSWKPP). Positions 217-224 (MKKISKLP) match the Nuclear localization signal motif. The JmjC domain maps to 361–527 (KYAKSGWNLN…HGQIAIELYC (167 aa)). The Fe cation site is built by H407, E409, and H495. The Zn(2+) site is built by C617, C620, C631, C633, C640, H643, C648, and C650. The C5HC2 zinc finger occupies 617 to 667 (CCICFFDLHLSAAGCRCSPEKYSCLTHVKELCSCPWVTKYFLFRYDIDELN). The tract at residues 872 to 900 (DTRNTISLPTNDQKTMRRDVPSSTSHAEV) is disordered. Residues 875–884 (NTISLPTNDQ) are compositionally biased toward polar residues. In terms of domain architecture, FYR N-terminal spans 974 to 1032 (VVRRINCNVEPLSYGCVLSGKSWCSRRAIFPKGFRSRVKYINILDPTNMCFYISEILDA). Residues 1034 to 1124 (RNSPLFMVYL…RVCTDYWDSR (91 aa)) form the FYR C-terminal domain.

Belongs to the JARID1 histone demethylase family. Interacts with MMD1 in the nucleus of male meiocytes, especially on pachytene chromosomes. Requires Fe(2+) as cofactor. As to expression, confined to inflorescences.

The protein localises to the nucleus. The catalysed reaction is N(6),N(6),N(6)-trimethyl-L-lysyl(4)-[histone H3] + 2-oxoglutarate + O2 = N(6),N(6)-dimethyl-L-lysyl(4)-[histone H3] + formaldehyde + succinate + CO2. It carries out the reaction N(6),N(6)-dimethyl-L-lysyl(4)-[histone H3] + 2-oxoglutarate + O2 = N(6)-methyl-L-lysyl(4)-[histone H3] + formaldehyde + succinate + CO2. The enzyme catalyses N(6)-methyl-L-lysyl(4)-[histone H3] + 2-oxoglutarate + O2 = L-lysyl(4)-[histone H3] + formaldehyde + succinate + CO2. Its function is as follows. Functions as a histone H3 'Lys-4' (H3K4me) demethylase involved in the negative regulation of gene expression. Active on H3K4me1, H3K4me2 and H3K4me3. Not active on mono-, di- and trimethylated H3K9, H3K27 and H3K36 in somatic cells. However, also active on H3K9 when in complex with MMD1, a meiocyte-specific histone reader. Together with MMD1, promotes gene expression in male meiocytes in an H3K9me3-dependent manner, and contributes to meiotic chromosome condensation by triggering some condensin promoters (e.g. CAP-D3 and CAP-H). Together with JMJ14 and JMJ17, required for plant growth and development. Represses leaf senescence in an age-dependent manner by demethylating H3K4me3 activating histone marks at senescence-associated genes (SAGs) loci, including WRKY53 and SAG201, thus preventing their premature expression. In Arabidopsis thaliana (Mouse-ear cress), this protein is Putative lysine-specific demethylase JMJ16.